Here is a 43-residue protein sequence, read N- to C-terminus: Protein PsbN (43 aa).

A helical transmembrane segment spans residues 7–24 (VAISISRSLVSFTGYALY).

The protein belongs to the PsbN family.

Its subcellular location is the plastid. The protein resides in the chloroplast thylakoid membrane. Its function is as follows. May play a role in photosystem I and II biogenesis. This Ginkgo biloba (Ginkgo) protein is Protein PsbN.